Consider the following 235-residue polypeptide: Exosome complex component RRP46 (235 aa).

The tract at residues 1 to 21 (MEGAKRADANLLTDTGTESSP) is disordered. The segment covering 12 to 21 (LTDTGTESSP) has biased composition (polar residues). A phosphoserine mark is found at Ser20 and Ser23.

The protein belongs to the RNase PH family. In terms of assembly, homodimer. Component of the RNA exosome core complex (Exo-9), composed of EXOSC1, EXOSC2, EXOSC3, EXOSC4, EXOSC5, EXOSC6, EXOSC7, EXOSC8 and EXOSC9; within the complex interacts with EXOSC3, EXOSC8, and EXOSC9. The catalytically inactive RNA exosome core complex (Exo-9) associates with the catalytic subunit EXOSC10/RRP6. Exo-9 may associate with DIS3 to form the nucleolar exosome complex, or DIS3L to form the cytoplasmic exosome complex. Exo-9 is formed by a hexameric base ring consisting of the heterodimers EXOSC4-EXOSC9, EXOSC5-EXOSC8 and EXOSC6-EXOSC7, and a cap ring consisting of EXOSC1, EXOSC2 and EXOSC3. The RNA exosome complex associates with cofactors C1D/RRP47, MPHOSPH6/MPP6 and MTREX/MTR4. Interacts with GTPBP1. Interacts with ZC3HAV1. Interacts with DDX17 only in the presence of ZC3HAV1 in an RNA-independent manner.

It is found in the nucleus. The protein localises to the nucleolus. The protein resides in the cytoplasm. Non-catalytic component of the RNA exosome complex which has 3'-&gt;5' exoribonuclease activity and participates in a multitude of cellular RNA processing and degradation events. In the nucleus, the RNA exosome complex is involved in proper maturation of stable RNA species such as rRNA, snRNA and snoRNA, in the elimination of RNA processing by-products and non-coding 'pervasive' transcripts, such as antisense RNA species and promoter-upstream transcripts (PROMPTs), and of mRNAs with processing defects, thereby limiting or excluding their export to the cytoplasm. The RNA exosome may be involved in Ig class switch recombination (CSR) and/or Ig variable region somatic hypermutation (SHM) by targeting AICDA deamination activity to transcribed dsDNA substrates. In the cytoplasm, the RNA exosome complex is involved in general mRNA turnover and specifically degrades inherently unstable mRNAs containing AU-rich elements (AREs) within their 3' untranslated regions, and in RNA surveillance pathways, preventing translation of aberrant mRNAs. It seems to be involved in degradation of histone mRNA. The catalytic inactive RNA exosome core complex of 9 subunits (Exo-9) is proposed to play a pivotal role in the binding and presentation of RNA for ribonucleolysis, and to serve as a scaffold for the association with catalytic subunits and accessory proteins or complexes. In vitro, EXOSC5 does not bind or digest single-stranded RNA and binds to double-stranded DNA without detectable DNase activity. The protein is Exosome complex component RRP46 (Exosc5) of Mus musculus (Mouse).